The chain runs to 367 residues: Septin-1 (367 aa).

Residues 22–296 (KGFDFTLMVA…EGYRARCLQS (275 aa)) enclose the Septin-type G domain. The segment at 32-39 (GESGLGKS) is G1 motif. Residues 32 to 39 (GESGLGKS), Thr66, Gly92, and 171 to 179 (KADALMPKE) each bind GTP. Residues 89–92 (DTPG) are G3 motif. The tract at residues 170–173 (GKAD) is G4 motif. Ser206 carries the post-translational modification Phosphoserine. Residues Gly229 and Arg245 each contribute to the GTP site. Ser248 carries the post-translational modification Phosphoserine; by AURKB. Residue Thr251 is modified to Phosphothreonine. 2 positions are modified to phosphoserine; by AURKB: Ser307 and Ser315.

This sequence belongs to the TRAFAC class TrmE-Era-EngA-EngB-Septin-like GTPase superfamily. Septin GTPase family. As to quaternary structure, septins polymerize into heterooligomeric protein complexes that form filaments, and can associate with cellular membranes, actin filaments and microtubules. GTPase activity is required for filament formation. Interacts with AURKB.

The protein resides in the cytoplasm. Its subcellular location is the cytoskeleton. The protein localises to the microtubule organizing center. It localises to the centrosome. It is found in the midbody. Its function is as follows. Filament-forming cytoskeletal GTPase. May play a role in cytokinesis (Potential). This chain is Septin-1, found in Bos taurus (Bovine).